The following is a 634-amino-acid chain: Threonine--tRNA ligase (634 aa).

The segment at 1-142 (MQLLLIHSDY…LSRSIRPEGA (142 aa)) is editing domain. Residues 214–513 (PHVELMRRLE…TEEGKVPMLP (300 aa)) are catalytic. 3 residues coordinate Zn(2+): C306, H358, and H482.

Belongs to the class-II aminoacyl-tRNA synthetase family. As to quaternary structure, homodimer. Requires Zn(2+) as cofactor.

The protein resides in the cytoplasm. The enzyme catalyses tRNA(Thr) + L-threonine + ATP = L-threonyl-tRNA(Thr) + AMP + diphosphate + H(+). Functionally, catalyzes the attachment of threonine to tRNA(Thr) in a two-step reaction: L-threonine is first activated by ATP to form Thr-AMP and then transferred to the acceptor end of tRNA(Thr). Edits incorrectly charged L-seryl-tRNA(Thr) probably via its editing domain (tested with total bovine tRNA). Activates L-serine, but does not detectably transfer it to tRNA (tested with total bovine tRNA). This Methanosarcina mazei (strain ATCC BAA-159 / DSM 3647 / Goe1 / Go1 / JCM 11833 / OCM 88) (Methanosarcina frisia) protein is Threonine--tRNA ligase.